A 130-amino-acid chain; its full sequence is Putative pre-16S rRNA nuclease (130 aa).

This sequence belongs to the YqgF nuclease family.

Its subcellular location is the cytoplasm. Could be a nuclease involved in processing of the 5'-end of pre-16S rRNA. The polypeptide is Putative pre-16S rRNA nuclease (Sulfurimonas denitrificans (strain ATCC 33889 / DSM 1251) (Thiomicrospira denitrificans (strain ATCC 33889 / DSM 1251))).